A 407-amino-acid chain; its full sequence is MNVNGENNEKIDEHHLESSLAGVPTLPVSPLDHAKDLSQTNPNAQIGDLVTQTANLIAIKKQLLEDIAFNQHIQSMQVRAIQSFPQNNQVAPPFQQFDPRRRGLARMQKPESYKTVICQAWLESKTCSFADNCRFAHGEEELRPTFVEPLQNNKYKTKLCDKYTTTGLCPYGKRCLFIHPDHGPNAYIRADKLLEVSQRHALADIRDQMEQHIMTNGRIAAPPLSAIQHPLEMFARPSTPDEPAAKLPLGPTPVSTRGPRYELPTKELHDAEGAMTYPPSRWPLDPSMFALDAWNMAHRPASPLDSMVLGSAPNAGSFGMLGKQNTPGGVSGYSSAGSTPSQDLSSSSLNAASAAAAAAYFANSAVAQSLLMKSVATDPMMSCNGPFSPMPGFDQLAENMTKHLNLW.

Residues 1–39 (MNVNGENNEKIDEHHLESSLAGVPTLPVSPLDHAKDLSQ) are disordered. A compositionally biased stretch (basic and acidic residues) spans 7 to 17 (NNEKIDEHHLE). Positions 46–80 (IGDLVTQTANLIAIKKQLLEDIAFNQHIQSMQVRA) are required for taf-4 binding. 2 consecutive C3H1-type zinc fingers follow at residues 112 to 140 (SYKT…HGEE) and 154 to 182 (KYKT…HPDH). Threonine 239 carries the post-translational modification Phosphothreonine; by mbk-2 and GSK3. Phosphoserine; by mbk-2 is present on serine 302. Threonine 339 is subject to Phosphothreonine; by GSK3.

In terms of assembly, interacts with taf-4 (via C-terminus). Interacts with ifet-1. Component of a ribonucleoprotein particle complex that interacts with cgh-1 and car-1 in an RNA-dependent manner. Association with many proteins is dependent on the presence of RNA. In terms of processing, phosphorylation by mbk-2 and by gsk-3 are required for its rapid degradation following meiosis II. As to expression, exclusively expressed in the hermaphrodite gonad. Expressed prior to oocyte division. Widely distributed throughout gonadal oocytes from the mitotic stage to the developing diakinesis stage. Expressed in sperm.

The protein localises to the cytoplasm. Its subcellular location is the cytoplasmic granule. It localises to the nucleus. Its function is as follows. Zinc-finger RNA-binding protein that binds to 5'-UA[AU]-3' motifs in the 3'-UTR of maternal mRNAs to suppress translation in oocytes and embryos. Acts as a ribonucleoprotein particle component that may exert part of its function within cytoplasmic foci of unfertilized oocytes. Acts redundantly with oma-2 to control the temporal expression and distribution of maternal proteins and thereby promote meiotic progression, oocyte maturation, fertilization and embryonic development. Recruits the translational repressor ifet-1 to the 3'-UTR of mei-1 and zif-1 to negatively regulate their translation. By suppressing the translation of the E3 ligase zif-1, may in turn play a role in the stabilization of zif-1 targets such as the maternal transcriptional repressor protein pie-1. Following fertilization, sequesters the transcription initiation factor, taf-4, in the cytoplasm, which prevents its nuclear localization and thus allows for transcriptional suppression in early embryos, but not in oocytes. Also, together with oma-2, is involved in P-granule distribution during embryonic development. This Caenorhabditis elegans protein is CCCH-type zinc finger protein oma-1.